The sequence spans 199 residues: UPF0316 protein LA_0606 (199 aa).

2 helical membrane passes run 47–67 and 73–93; these read IAAS…TQVI and VFCY…GMIL.

The protein belongs to the UPF0316 family.

It is found in the cell membrane. The polypeptide is UPF0316 protein LA_0606 (Leptospira interrogans serogroup Icterohaemorrhagiae serovar Lai (strain 56601)).